The chain runs to 287 residues: uncharacterized protein (287 aa).

Catalysis depends on charge relay system residues Thr43 and Tyr104. Tyr130 serves as the catalytic Proton donor. Lys158 functions as the Schiff-base intermediate with substrate in the catalytic mechanism.

Belongs to the DapA family. In terms of assembly, homotetramer.

The protein resides in the cytoplasm. This is an uncharacterized protein from Pyrococcus horikoshii (strain ATCC 700860 / DSM 12428 / JCM 9974 / NBRC 100139 / OT-3).